A 304-amino-acid polypeptide reads, in one-letter code: Ribokinase (304 aa).

Substrate contacts are provided by residues 12-14 (NVD), 41-45 (GKGAN), and glutamate 142. ATP contacts are provided by residues asparagine 186 and 222-227 (TLGKQG). K(+) is bound by residues aspartate 248 and threonine 250. ATP is bound by residues 253–254 (GD) and asparagine 279. Position 254 (aspartate 254) interacts with substrate. The Proton acceptor role is filled by aspartate 254. 4 residues coordinate K(+): threonine 285, lysine 288, glycine 290, and serine 294.

Belongs to the carbohydrate kinase PfkB family. Ribokinase subfamily. In terms of assembly, homodimer. The cofactor is Mg(2+).

It is found in the cytoplasm. It catalyses the reaction D-ribose + ATP = D-ribose 5-phosphate + ADP + H(+). It functions in the pathway carbohydrate metabolism; D-ribose degradation; D-ribose 5-phosphate from beta-D-ribopyranose: step 2/2. Its activity is regulated as follows. Activated by a monovalent cation that binds near, but not in, the active site. The most likely occupant of the site in vivo is potassium. Ion binding induces a conformational change that may alter substrate affinity. Its function is as follows. Catalyzes the phosphorylation of ribose at O-5 in a reaction requiring ATP and magnesium. The resulting D-ribose-5-phosphate can then be used either for sythesis of nucleotides, histidine, and tryptophan, or as a component of the pentose phosphate pathway. This Staphylococcus aureus (strain COL) protein is Ribokinase.